Reading from the N-terminus, the 248-residue chain is Coproheme decarboxylase (248 aa).

Fe-coproporphyrin III is bound by residues Arg-130, 144 to 148 (YPMDK), His-171, Gln-184, and Ser-222. Tyr-144 is a catalytic residue.

The protein belongs to the ChdC family. Type 1 subfamily. As to quaternary structure, homopentamer. Fe-coproporphyrin III is required as a cofactor.

It catalyses the reaction Fe-coproporphyrin III + 2 H2O2 + 2 H(+) = heme b + 2 CO2 + 4 H2O. The enzyme catalyses Fe-coproporphyrin III + H2O2 + H(+) = harderoheme III + CO2 + 2 H2O. The catalysed reaction is harderoheme III + H2O2 + H(+) = heme b + CO2 + 2 H2O. It functions in the pathway porphyrin-containing compound metabolism; protoheme biosynthesis. Its function is as follows. Involved in coproporphyrin-dependent heme b biosynthesis. Catalyzes the decarboxylation of Fe-coproporphyrin III (coproheme) to heme b (protoheme IX), the last step of the pathway. The reaction occurs in a stepwise manner with a three-propionate intermediate. The protein is Coproheme decarboxylase of Geobacillus kaustophilus (strain HTA426).